The chain runs to 95 residues: Integration host factor subunit beta (95 aa).

Belongs to the bacterial histone-like protein family. As to quaternary structure, heterodimer of an alpha and a beta chain.

In terms of biological role, this protein is one of the two subunits of integration host factor, a specific DNA-binding protein that functions in genetic recombination as well as in transcriptional and translational control. In Shewanella putrefaciens (strain CN-32 / ATCC BAA-453), this protein is Integration host factor subunit beta.